The chain runs to 164 residues: Putative HTH-type transcriptional regulator ORF2 (164 aa).

In terms of domain architecture, HTH rrf2-type spans 2–131 (RLTTKGRYAV…SGISLADLVA (130 aa)).

The chain is Putative HTH-type transcriptional regulator ORF2 from Azotobacter vinelandii.